Consider the following 161-residue polypeptide: Regulator of ribonuclease activity A (161 aa).

Belongs to the RraA family. As to quaternary structure, homotrimer. Binds to both RNA-binding sites in the C-terminal region of Rne and to RhlB.

The protein resides in the cytoplasm. Globally modulates RNA abundance by binding to RNase E (Rne) and regulating its endonucleolytic activity. Can modulate Rne action in a substrate-dependent manner by altering the composition of the degradosome. Modulates RNA-binding and helicase activities of the degradosome. The polypeptide is Regulator of ribonuclease activity A (Enterobacter sp. (strain 638)).